Reading from the N-terminus, the 255-residue chain is MAQEKMDLDFEADTSEGATLRRSNSAPLIHVLSDLSQVFEPYPLRTGRTSTAIMSHHSLEEGLDMMNRETTNEREAQAGMQISQSWDESLSLSDSDFDKPEKLYSPKRIDFTPVSPAPSPTRGFGKQCLSPSLQMFVSSSGMPPSPVLNPRHFSRRSQSPVKCIRPSVLGPLKRKGEMEMESQPKRPFQGTTSMLSTNPAQLSDFSSCSDILDGSSISSGLSSDSLATGSAPAESPVACSNSCSPFILMDDLSPK.

Positions 1-24 are disordered; sequence MAQEKMDLDFEADTSEGATLRRSN. Residue alanine 2 is modified to N-acetylalanine. 4 positions are modified to phosphoserine: serine 25, serine 33, serine 50, and serine 58. Threonine 112 is subject to Phosphothreonine. Phosphoserine is present on residues serine 115 and serine 119. Position 122 is an omega-N-methylarginine (arginine 122). Serine 145 bears the Phosphoserine mark. Disordered stretches follow at residues 169-196 and 219-238; these read LGPL…SMLS and SGLS…SPVA. Residues 174 to 184 show a composition bias toward basic and acidic residues; that stretch reads RKGEMEMESQP.

It belongs to the FAM122 family.

This is PABIR family member 2 from Mus musculus (Mouse).